Reading from the N-terminus, the 360-residue chain is Alpha-2-macroglobulin receptor-associated protein (360 aa).

The N-terminal stretch at 1–33 (MAPLRDRVSTLPRLQLLVLLLLPLLLVPQPIAG) is a signal peptide. Phosphoserine is present on residues Ser53 and Ser138. Residues 222–302 (SKHSELKDRL…KHNHYQKQLE (81 aa)) adopt a coiled-coil conformation. Residues 240–356 (RLRKVSHQGY…DLSSRVSRAR (117 aa)) form an LDL receptor binding region. Asn271 carries an N-linked (GlcNAc...) asparagine glycan. The Prevents secretion from ER motif lies at 357–360 (HNEL).

The protein belongs to the alpha-2-MRAP family. As to quaternary structure, interacts with the LRP1/alpha-2-macroglobulin receptor heavy and light chains; the interaction is transient and coincides with a reduction of ligand binding by the receptor. Interacts with LRP2/glycoprotein 330. Interacts with LRP1B; binding is followed by internalization and degradation. Interacts with LDLR. Interacts with SORL1. Interacts with LRP1; this interaction is followed by rapid internalization. N-glycosylated.

The protein localises to the rough endoplasmic reticulum lumen. The protein resides in the endoplasmic reticulum-Golgi intermediate compartment lumen. Its subcellular location is the golgi apparatus. It localises to the cis-Golgi network. It is found in the golgi apparatus lumen. The protein localises to the endosome lumen. The protein resides in the cell surface. Molecular chaperone for LDL receptor-related proteins that may regulate their ligand binding activity along the secretory pathway. The sequence is that of Alpha-2-macroglobulin receptor-associated protein (Lrpap1) from Rattus norvegicus (Rat).